The primary structure comprises 392 residues: Homoserine O-acetyltransferase (392 aa).

In terms of domain architecture, AB hydrolase-1 spans 52-356 (NVVVVLHALT…ICGHDGFLVE (305 aa)). The active-site Nucleophile is the Ser157. Position 227 (Arg227) interacts with substrate. Active-site residues include Asp320 and His350. Asp351 is a substrate binding site. A disordered region spans residues 373–392 (SQSAGPGGAGPGSRKGTTRR).

This sequence belongs to the AB hydrolase superfamily. MetX family. In terms of assembly, homodimer.

The protein resides in the cytoplasm. The enzyme catalyses L-homoserine + acetyl-CoA = O-acetyl-L-homoserine + CoA. It participates in amino-acid biosynthesis; L-methionine biosynthesis via de novo pathway; O-acetyl-L-homoserine from L-homoserine: step 1/1. In terms of biological role, transfers an acetyl group from acetyl-CoA to L-homoserine, forming acetyl-L-homoserine. This Mycolicibacterium paratuberculosis (strain ATCC BAA-968 / K-10) (Mycobacterium paratuberculosis) protein is Homoserine O-acetyltransferase.